The sequence spans 244 residues: MTEGDDQLISIRKQLENLNNATDDINSYEMKLETVKKQFCETQLMFNKEMLGIPKKLAKHISKSRQFFDLKSRESEIRRCVQQAAAQFERQKTSVEMAREQVQILHNSLNNNQELDAEKQYVDVIEQQLELVKEAEGECLKAEKCHASRVRDLLQLEMALRKCLEENGSAIKKSRPYYERKEVLTRTMNSQLELMSILEHEVQERKDSYSDSMRALEQISDQIHQERSSQSSLAPSSDAESDSS.

Coiled coils occupy residues 6 to 39 (DQLI…KKQF) and 81 to 144 (VQQA…KAEK). The segment at 221–244 (DQIHQERSSQSSLAPSSDAESDSS) is disordered. Positions 228–238 (SSQSSLAPSSD) are enriched in low complexity.

This sequence belongs to the SH3BP5 family. Homodimer, tetramer and multimer. Interacts with rab-11.1. Binds preferentially to the GDP-bound form of rab-11.1. In terms of tissue distribution, expressed in germ cells.

It localises to the cytoplasmic granule. It is found in the golgi apparatus membrane. Functionally, guanine nucleotide exchange factor for Rab GTPase Rab-11.1. Spatially and temporally regulates the distribution of Rab-11.1 to target membranes during embryogenesis. Plays a role in cytokinesis, probably by targeting rab-11.1 to the cleavage furrows. This is Guanine nucleotide exchange factor rei-1 from Caenorhabditis elegans.